We begin with the raw amino-acid sequence, 344 residues long: Holliday junction branch migration complex subunit RuvB (344 aa).

The large ATPase domain (RuvB-L) stretch occupies residues 1–182 (MSDRLISATA…FGIISRLEFY (182 aa)). ATP-binding positions include L21, R22, G63, K66, T67, T68, 129-131 (EDF), R172, Y182, and R219. T67 contacts Mg(2+). The interval 183 to 253 (NNEDLTRIVT…VAAEALEFFE (71 aa)) is small ATPAse domain (RuvB-S). Residues 256–344 (PLGLDHTDRR…QKGLEQNSLF (89 aa)) form a head domain (RuvB-H) region. R311 and R316 together coordinate DNA.

This sequence belongs to the RuvB family. Homohexamer. Forms an RuvA(8)-RuvB(12)-Holliday junction (HJ) complex. HJ DNA is sandwiched between 2 RuvA tetramers; dsDNA enters through RuvA and exits via RuvB. An RuvB hexamer assembles on each DNA strand where it exits the tetramer. Each RuvB hexamer is contacted by two RuvA subunits (via domain III) on 2 adjacent RuvB subunits; this complex drives branch migration. In the full resolvosome a probable DNA-RuvA(4)-RuvB(12)-RuvC(2) complex forms which resolves the HJ.

The protein localises to the cytoplasm. It carries out the reaction ATP + H2O = ADP + phosphate + H(+). Functionally, the RuvA-RuvB-RuvC complex processes Holliday junction (HJ) DNA during genetic recombination and DNA repair, while the RuvA-RuvB complex plays an important role in the rescue of blocked DNA replication forks via replication fork reversal (RFR). RuvA specifically binds to HJ cruciform DNA, conferring on it an open structure. The RuvB hexamer acts as an ATP-dependent pump, pulling dsDNA into and through the RuvAB complex. RuvB forms 2 homohexamers on either side of HJ DNA bound by 1 or 2 RuvA tetramers; 4 subunits per hexamer contact DNA at a time. Coordinated motions by a converter formed by DNA-disengaged RuvB subunits stimulates ATP hydrolysis and nucleotide exchange. Immobilization of the converter enables RuvB to convert the ATP-contained energy into a lever motion, pulling 2 nucleotides of DNA out of the RuvA tetramer per ATP hydrolyzed, thus driving DNA branch migration. The RuvB motors rotate together with the DNA substrate, which together with the progressing nucleotide cycle form the mechanistic basis for DNA recombination by continuous HJ branch migration. Branch migration allows RuvC to scan DNA until it finds its consensus sequence, where it cleaves and resolves cruciform DNA. The protein is Holliday junction branch migration complex subunit RuvB of Desulforamulus reducens (strain ATCC BAA-1160 / DSM 100696 / MI-1) (Desulfotomaculum reducens).